We begin with the raw amino-acid sequence, 160 residues long: Epithelial membrane protein 1 (160 aa).

A helical transmembrane segment spans residues 1–21 (MLVLLAGLFVVHIATAIMLFV). 2 N-linked (GlcNAc...) asparagine glycosylation sites follow: asparagine 35 and asparagine 43. The next 2 helical transmembrane spans lie at 67–87 (FMIL…FQLF) and 95–115 (FFLS…GVSI). Asparagine 128 carries N-linked (GlcNAc...) asparagine glycosylation. A helical membrane pass occupies residues 137 to 157 (FILTWICFCFSFIIGILYMVL).

The protein belongs to the PMP-22/EMP/MP20 family.

Its subcellular location is the membrane. This chain is Epithelial membrane protein 1 (Emp1), found in Mus musculus (Mouse).